A 334-amino-acid chain; its full sequence is HTH-type transcriptional repressor PurR (334 aa).

Residues 2 to 56 enclose the HTH lacI-type domain; sequence ATIKDVARLAGVSTTTVSHVINKTRFVAEATQEKVNKAVDELNYAPSAVARSLKC. The H-T-H motif DNA-binding region spans 4–23; sequence IKDVARLAGVSTTTVSHVIN. The DNA-binding element occupies 48 to 56; the sequence is SAVARSLKC. The hypoxanthine site is built by Phe73, Lys189, Phe220, and Asp274.

In terms of assembly, homodimer.

It participates in purine metabolism; purine nucleotide biosynthesis [regulation]. Functionally, is the main repressor of the genes involved in the de novo synthesis of purine nucleotides, regulating purB, purC, purEK, purF, purHD, purL, purMN and guaBA expression. PurR is allosterically activated to bind its cognate DNA by binding the purine corepressors, hypoxanthine or guanine, thereby effecting transcription repression. The chain is HTH-type transcriptional repressor PurR from Vibrio atlanticus (strain LGP32) (Vibrio splendidus (strain Mel32)).